Reading from the N-terminus, the 126-residue chain is Nascent polypeptide-associated complex protein (126 aa).

An NAC-A/B domain is found at 10–77; it reads PRMMKQMQKM…AKKVAKEEEK (68 aa).

It belongs to the NAC-alpha family. As to quaternary structure, homodimer. Interacts with the ribosome. Binds ribosomal RNA.

Functionally, contacts the emerging nascent chain on the ribosome. The chain is Nascent polypeptide-associated complex protein from Methanococcus maripaludis (strain C7 / ATCC BAA-1331).